We begin with the raw amino-acid sequence, 125 residues long: UPF0231 protein in hemN 3'region (125 aa).

It belongs to the UPF0231 family.

The sequence is that of UPF0231 protein in hemN 3'region from Mannheimia haemolytica (Pasteurella haemolytica).